The primary structure comprises 281 residues: Release factor glutamine methyltransferase (281 aa).

Residues E142 and N184 each coordinate S-adenosyl-L-methionine. 184 to 187 (NPPY) serves as a coordination point for substrate. A disordered region spans residues 261–281 (AADHPDLNNRPRFATARKALP).

This sequence belongs to the protein N5-glutamine methyltransferase family. PrmC subfamily.

It catalyses the reaction L-glutaminyl-[peptide chain release factor] + S-adenosyl-L-methionine = N(5)-methyl-L-glutaminyl-[peptide chain release factor] + S-adenosyl-L-homocysteine + H(+). Methylates the class 1 translation termination release factors RF1/PrfA and RF2/PrfB on the glutamine residue of the universally conserved GGQ motif. The chain is Release factor glutamine methyltransferase from Streptomyces coelicolor (strain ATCC BAA-471 / A3(2) / M145).